Reading from the N-terminus, the 353-residue chain is GSLKRPEDLLGEFELRLLHMFGLKRRPSPGKDVVIPPYMLDLYRLHAGQQLGYPLERAACRANTVCSFHHEEVLEELPETSGKTARRFFFNLTSIPNEESVTSAELQIFPGEQVHEAFESNSSYHHRINIYEIMKPATATSKDPVTRLLDTRLVHHNASKWESSDVTPAVLRWIAHGQPNHGFVVEVVHLDKENSASKRHVRISRSLHQDEDSWSQLRPLLVTFGHDGKGHPLHKREKRQAKHKQRKRHKYSCKRHPLYVDFNDVGWNDWIVAPPGYSAFYCHGECPFPLADHLNSTNHAIVQTLVNSVNSKIPKACCVPTELSAISMLYLDENEKVVLKNYQDMVVEGCGCR.

The propeptide occupies 1 to 239 (GSLKRPEDLL…GHPLHKREKR (239 aa)). N-linked (GlcNAc...) asparagine glycans are attached at residues Asn-91, Asn-121, and Asn-157. Positions 228 to 248 (GKGHPLHKREKRQAKHKQRKR) are disordered. The span at 231–248 (HPLHKREKRQAKHKQRKR) shows a compositional bias: basic residues. Intrachain disulfides connect Cys-253–Cys-318, Cys-282–Cys-350, and Cys-286–Cys-352. The N-linked (GlcNAc...) asparagine glycan is linked to Asn-295.

Belongs to the TGF-beta family. In terms of assembly, homodimer; disulfide-linked.

The protein localises to the secreted. Its function is as follows. Negatively regulates the structure and function of the limb apical ectodermal ridge. In Gallus gallus (Chicken), this protein is Bone morphogenetic protein 2 (BMP2).